The sequence spans 299 residues: Probable GTP 3',8-cyclase (299 aa).

The region spanning 4–229 is the Radical SAM core domain; the sequence is LHNREIKSLR…MQNRKKYLVD (226 aa). Arg13 contacts GTP. The [4Fe-4S] cluster site is built by Cys20 and Cys24. Position 26 (Tyr26) interacts with S-adenosyl-L-methionine. Residue Cys27 participates in [4Fe-4S] cluster binding. Residue Lys61 coordinates GTP. Gly65 is a binding site for S-adenosyl-L-methionine. Residue Thr94 participates in GTP binding. Ser118 lines the S-adenosyl-L-methionine pocket. Lys154 provides a ligand contact to GTP. 2 residues coordinate [4Fe-4S] cluster: Cys245 and Cys248. A GTP-binding site is contributed by 250–252; sequence RIR. Cys262 is a binding site for [4Fe-4S] cluster.

Belongs to the radical SAM superfamily. MoaA family. The cofactor is [4Fe-4S] cluster.

It carries out the reaction GTP + AH2 + S-adenosyl-L-methionine = (8S)-3',8-cyclo-7,8-dihydroguanosine 5'-triphosphate + 5'-deoxyadenosine + L-methionine + A + H(+). It participates in cofactor biosynthesis; molybdopterin biosynthesis. Its function is as follows. Catalyzes the cyclization of GTP to (8S)-3',8-cyclo-7,8-dihydroguanosine 5'-triphosphate. This Methanococcus aeolicus (strain ATCC BAA-1280 / DSM 17508 / OCM 812 / Nankai-3) protein is Probable GTP 3',8-cyclase.